We begin with the raw amino-acid sequence, 434 residues long: Serine--tRNA ligase (434 aa).

L-serine is bound at residue 230–232 (TSE). Residues 261-263 (RRE) and Val277 each bind ATP. Glu284 provides a ligand contact to L-serine. Position 348–351 (348–351 (ELTS)) interacts with ATP. Thr393 contributes to the L-serine binding site.

Belongs to the class-II aminoacyl-tRNA synthetase family. Type-1 seryl-tRNA synthetase subfamily. In terms of assembly, homodimer. The tRNA molecule binds across the dimer.

The protein localises to the cytoplasm. The enzyme catalyses tRNA(Ser) + L-serine + ATP = L-seryl-tRNA(Ser) + AMP + diphosphate + H(+). It catalyses the reaction tRNA(Sec) + L-serine + ATP = L-seryl-tRNA(Sec) + AMP + diphosphate + H(+). It functions in the pathway aminoacyl-tRNA biosynthesis; selenocysteinyl-tRNA(Sec) biosynthesis; L-seryl-tRNA(Sec) from L-serine and tRNA(Sec): step 1/1. Functionally, catalyzes the attachment of serine to tRNA(Ser). Is also able to aminoacylate tRNA(Sec) with serine, to form the misacylated tRNA L-seryl-tRNA(Sec), which will be further converted into selenocysteinyl-tRNA(Sec). The chain is Serine--tRNA ligase from Kocuria rhizophila (strain ATCC 9341 / DSM 348 / NBRC 103217 / DC2201).